The chain runs to 245 residues: Folate receptor gamma (245 aa).

The signal sequence occupies residues 1–22; that stretch reads MDMAWQMMQLLLLALVTAAGSA. Cystine bridges form between Cys37–Cys65, Cys57–Cys105, Cys66–Cys109, Cys89–Cys175, Cys96–Cys146, Cys135–Cys209, Cys139–Cys189, and Cys152–Cys169. Positions 103 and 107 each coordinate folate. Asn121 carries N-linked (GlcNAc...) asparagine glycosylation. Folate contacts are provided by residues 124-128, 157-162, and Ser196; these read WRKER and HKGWNW. Asn161 carries an N-linked (GlcNAc...) asparagine glycan. Asn201 carries N-linked (GlcNAc...) asparagine glycosylation.

Belongs to the folate receptor family. Spleen, thymus, bone marrow, ovarian carcinoma, and uterine carcinoma.

The protein resides in the secreted. Its function is as follows. Binds to folate and reduced folic acid derivatives and mediates delivery of 5-methyltetrahydrofolate to the interior of cells. Isoform Short does not bind folate. The polypeptide is Folate receptor gamma (FOLR3) (Homo sapiens (Human)).